The primary structure comprises 356 residues: S-adenosylmethionine:tRNA ribosyltransferase-isomerase (356 aa).

It belongs to the QueA family. As to quaternary structure, monomer.

It is found in the cytoplasm. It catalyses the reaction 7-aminomethyl-7-carbaguanosine(34) in tRNA + S-adenosyl-L-methionine = epoxyqueuosine(34) in tRNA + adenine + L-methionine + 2 H(+). It functions in the pathway tRNA modification; tRNA-queuosine biosynthesis. Transfers and isomerizes the ribose moiety from AdoMet to the 7-aminomethyl group of 7-deazaguanine (preQ1-tRNA) to give epoxyqueuosine (oQ-tRNA). In Citrobacter koseri (strain ATCC BAA-895 / CDC 4225-83 / SGSC4696), this protein is S-adenosylmethionine:tRNA ribosyltransferase-isomerase.